The chain runs to 338 residues: Methionine synthase (338 aa).

Residues His-211, Cys-213, and Cys-294 each coordinate Zn(2+).

It belongs to the archaeal MetE family. Zn(2+) is required as a cofactor.

The protein operates within amino-acid biosynthesis; L-methionine biosynthesis via de novo pathway. Its function is as follows. Catalyzes the transfer of a methyl group to L-homocysteine resulting in methionine formation. The physiological methyl donor is unknown. This Sulfurisphaera tokodaii (strain DSM 16993 / JCM 10545 / NBRC 100140 / 7) (Sulfolobus tokodaii) protein is Methionine synthase.